The primary structure comprises 420 residues: Nucleobindin-2 (420 aa).

An N-terminal signal peptide occupies residues 1–24 (MRWRIIQVQYCFLLVPCMLTALEA). Residues 171 to 223 (RTRHEEFKKYEMMKEHERREYLKTLSEEKRKEEESKFEEMKRKHEDHPKVNHP) mediate DNA binding. The tract at residues 193 to 225 (KTLSEEKRKEEESKFEEMKRKHEDHPKVNHPGS) is disordered. Residues 213–420 (KHEDHPKVNH…AGELKFEPHT (208 aa)) form a binds to necdin region. 2 EF-hand domains span residues 241–276 (PNDFDPKTFFKLHDVNNDGFLDEQELEALFTRELEK) and 293–328 (ERLRMREHVMSEIDNNKDRLVTLEEFLRATEKKEFL). The Ca(2+) site is built by Asp-254, Asn-256, Asp-258, Glu-265, Asp-306, Asn-308, Asp-310, and Glu-317. Residues 304-334 (EIDNNKDRLVTLEEFLRATEKKEFLEPDSWE) carry the GBA motif. A Phosphoserine modification is found at Ser-332. A compositionally biased stretch (basic and acidic residues) spans 365–389 (AEELQKQKEDLQRQHDHLEAQKQEY). The disordered stretch occupies residues 365-420 (AEELQKQKEDLQRQHDHLEAQKQEYHQAVQHLEQKKLQQGIAPSGPAGELKFEPHT).

Belongs to the nucleobindin family. In terms of assembly, interacts (via GBA motif) with guanine nucleotide-binding protein G(i) alpha subunit GNAI3. Preferentially interacts with inactive rather than active GNAI3. Interaction with GNAI3 is inhibited when NUCB2 binds calcium, probably due to a conformational change which renders the GBA motif inaccessible. Binds to the postmitotic growth suppressor NDN; coexpression abolishes NUCB2 secretion. Interacts with MC4R. Found in liver, heart, thymus, muscle, intestine, kidney, lung, spleen and throughout the brain, in cerebral cortex, hippocampus, hypothalamus and medulla oblongata. Nucb2 and necdin levels were higher in postmitotic neurons.

The protein localises to the cytoplasm. It localises to the perikaryon. Its subcellular location is the endoplasmic reticulum. It is found in the golgi apparatus. The protein resides in the nucleus envelope. The protein localises to the membrane. It localises to the secreted. Functionally, calcium-binding protein which may have a role in calcium homeostasis. Acts as a non-receptor guanine nucleotide exchange factor which binds to and activates guanine nucleotide-binding protein (G-protein) alpha subunit GNAI3. In terms of biological role, anorexigenic peptide, seems to play an important role in hypothalamic pathways regulating food intake and energy homeostasis, acting in a leptin-independent manner. May also exert hypertensive roles and modulate blood pressure through directly acting on peripheral arterial resistance. In intestinal epithelial cells, plays a role in the inhibition of hepatic glucose production via MC4R receptor leading to increased cyclic adenosine monophosphate (cAMP) levels and glucagon-like peptide 1 (GLP-1) secretion. The protein is Nucleobindin-2 (Nucb2) of Mus musculus (Mouse).